We begin with the raw amino-acid sequence, 440 residues long: Actin-like protein 7A (440 aa).

The interval 1-27 is disordered; that stretch reads MSLDAVWAPQTANIGDGPAKKASDQTS. Positions 36 to 56 are required for interaction with TES; it reads ASLRDGPAKRAVWVRRDNAEK.

This sequence belongs to the actin family. As to quaternary structure, interacts (via N-terminus) with TES (via LIM domain 2). Heterodimer with TES; the heterodimer interacts with ENAH to form a heterotrimer. Interacts with ACTL9. Interacts with CYLC1; the interaction may be relevant for proper acrosome attachment to the nuclear envelope. Detected in testis. Detected at the acrosome of round spermatids (at protein level).

It localises to the cytoplasm. Its subcellular location is the cytoskeleton. The protein resides in the golgi apparatus. The protein localises to the nucleus. Its function is as follows. Essential for normal spermatogenesis and male fertility. Required for normal sperm head morphology, acroplaxome formation, acrosome attachment, and acrosome granule stability. May anchor and stabilize acrosomal adherence to the acroplaxome at least in part by facilitating the presence of F-actin in the subacrosomal space. May play an important role in formation and fusion of Golgi-derived vesicles during acrosome biogenesis. This chain is Actin-like protein 7A (Actl7a), found in Rattus norvegicus (Rat).